Consider the following 566-residue polypeptide: DDB1- and CUL4-associated factor 10 (566 aa).

Disordered regions lie at residues 1-72 and 87-123; these read MFPF…AERA and TASA…GAGL. Phosphoserine is present on residues serine 50, serine 57, serine 67, serine 96, serine 99, and serine 100. A compositionally biased stretch (low complexity) spans 87–100; the sequence is TASASQAKLSPSSS. An Omega-N-methylarginine modification is found at arginine 141. 4 WD repeats span residues 173–212, 216–254, 258–297, and 303–342; these read RTHG…HIKT, AHED…TKVC, GHTS…EDGC, and FHTR…KSLE. The segment covering 354 to 374 has biased composition (low complexity); the sequence is TTSSSDLTTTSSSSGSRVSGS. A disordered region spans residues 354–413; sequence TTSSSDLTTTSSSSGSRVSGSPCHHNDSNSTEKHMSRASQREGVSPRNSLEVLTPEVPGE. Residue serine 356 is modified to Phosphoserine. Residues 377 to 388 are compositionally biased toward basic and acidic residues; sequence HHNDSNSTEKHM. WD repeat units lie at residues 415 to 455, 477 to 515, and 533 to 566; these read DRGN…QEGA, VGRG…SELV, and SHND…QPKF.

This sequence belongs to the WD repeat DCAF10 family. In terms of assembly, interacts with DDB1.

It functions in the pathway protein modification; protein ubiquitination. Functionally, may function as a substrate receptor for CUL4-DDB1 E3 ubiquitin-protein ligase complex. In Mus musculus (Mouse), this protein is DDB1- and CUL4-associated factor 10 (Dcaf10).